Consider the following 868-residue polypeptide: Cytosolic phospholipase A2 epsilon (868 aa).

The tract at residues 1–46 is disordered; it reads MSLQASEGCPGLGTNVFVPQSPQTDEEGSRSGRSFSEFEDTQDLDT. Residues 46–170 enclose the C2 domain; it reads TPGLPPFCPM…CFRKKTHVKF (125 aa). Ca(2+) contacts are provided by D84, D90, D140, D142, and D148. The region spanning 324–856 is the PLA2c domain; sequence PCPETLDVRL…TLLQALRLAV (533 aa). The Nucleophile role is filled by S412. Catalysis depends on D700, which acts as the Proton acceptor. S800 carries the post-translational modification Phosphoserine. Residues 857 to 868 are required for localization at membrane structures; sequence EKKKRLKGQCPS.

It depends on Ca(2+) as a cofactor.

The protein localises to the cytoplasm. Its subcellular location is the cytosol. It localises to the early endosome membrane. The protein resides in the lysosome membrane. It is found in the cell membrane. It carries out the reaction a 1,2-diacyl-sn-glycero-3-phosphoethanolamine + a 1,2-diacyl-sn-glycero-3-phosphocholine = an N-acyl-1,2-diacyl-sn-glycero-3-phosphoethanolamine + a 2-acyl-sn-glycero-3-phosphocholine + H(+). The enzyme catalyses 1-hexadecanoyl-2-octadecanoyl-sn-glycero-3-phosphocholine + 1,2-di-(9Z-octadecenoyl)-sn-glycero-3-phosphoethanolamine = 2-octadecanoyl-sn-glycero-3-phosphocholine + N-hexadecanoyl-1,2-di-(9Z-octadecenoyl)-sn-glycero-3-phosphoethanolamine + H(+). It catalyses the reaction 1-octadecanoyl-2-hexadecanoyl-sn-glycero-3-phosphocholine + 1,2-di-(9Z-octadecenoyl)-sn-glycero-3-phosphoethanolamine = N-octadecanoyl-1,2-di-(9Z-octadecenoyl)-sn-glycero-3-phosphoethanolamine + 2-hexadecanoyl-sn-glycero-3-phosphocholine + H(+). The catalysed reaction is 1,2-di-(9Z-octadecenoyl)-sn-glycero-3-phosphoethanolamine + 1,2-dihexadecanoyl-sn-glycero-3-phosphocholine = N-hexadecanoyl-1,2-di-(9Z-octadecenoyl)-sn-glycero-3-phosphoethanolamine + 2-hexadecanoyl-sn-glycero-3-phosphocholine + H(+). It carries out the reaction 1,2-di-(5Z,8Z,11Z,14Z-eicosatetraenoyl)-sn-glycero-3-phosphocholine + 1,2-di-(9Z-octadecenoyl)-sn-glycero-3-phosphoethanolamine = N-(5Z,8Z,11Z,14Z-eicosatetraenoyl)-1,2-di-(9Z-octadecenoyl)-sn-glycero-3-phosphoethanolamine + 2-(5Z,8Z,11Z,14Z)-eicosatetraenoyl-sn-glycero-3-phosphocholine + H(+). The enzyme catalyses 2 1,2-di-(9Z-octadecenoyl)-sn-glycero-3-phosphoethanolamine = N,1,2-tri-(9Z-octadecenoyl)-sn-glycero-3-phosphoethanolamine + 2-(9Z-octadecenoyl)-sn-glycero-3-phosphoethanolamine + H(+). It catalyses the reaction 1-(1Z-octadecenyl)-2-(9Z-octadecenoyl)-sn-glycero-3-phosphoethanolamine + 1,2-dihexadecanoyl-sn-glycero-3-phosphocholine = 1-O-(1Z-octadecenoyl)-2-(9Z-octadecenoyl)-sn-glycero-3-phospho-N-hexadecanoyl-ethanolamine + 2-hexadecanoyl-sn-glycero-3-phosphocholine + H(+). The catalysed reaction is a 1,2-diacyl-sn-glycero-3-phosphocholine + H2O = a 1-acyl-sn-glycero-3-phosphocholine + a fatty acid + H(+). It carries out the reaction 1-hexadecanoyl-2-(5Z,8Z,11Z,14Z-eicosatetraenoyl)-sn-glycero-3-phosphocholine + H2O = 1-hexadecanoyl-sn-glycero-3-phosphocholine + (5Z,8Z,11Z,14Z)-eicosatetraenoate + H(+). The enzyme catalyses 1-hexadecanoyl-sn-glycero-3-phosphocholine + H2O = sn-glycerol 3-phosphocholine + hexadecanoate + H(+). Stimulated by cytosolic Ca(2+). Stimulated by anionic phospholipids such as phosphatidylserines, phosphatidates and phosphatidylinositols. Calcium-dependent N-acyltransferase involved in the biosynthesis of N-acyl ethanolamines (NAEs) in the brain. Transfers the sn-1 fatty acyl chain of phosphatidylcholine (fatty acyl donor) to the amine group of phosphatidylethanolamine (fatty acyl acceptor) to generate N-acyl phosphatidylethanolamine (NAPE). Similarly can use plasmenylethanolamine as a fatty acyl acceptor to form N-acyl plasmenylethanolamine (N-Acyl-PlsEt). Both NAPE and N-Acyl-PlsEt can serve as precursors of bioactive NAEs like N-arachidonoyl phosphatidylethanolamine also called anandamide. Has weak phospholipase A2 and lysophospholipase activities. Regulates intracellular membrane trafficking that requires modulation of membrane curvature as it occurs by enrichment in lysophospholipids. Promotes tubule formation involved in clathrin-independent endocytotic trafficking and cargo recycling. The chain is Cytosolic phospholipase A2 epsilon from Homo sapiens (Human).